The sequence spans 189 residues: Ribosome maturation factor RimM (189 aa).

The PRC barrel domain maps to 96 to 169; the sequence is EDEFYYADLE…TLLIDPLAAG (74 aa).

This sequence belongs to the RimM family. Binds ribosomal protein uS19.

The protein localises to the cytoplasm. Functionally, an accessory protein needed during the final step in the assembly of 30S ribosomal subunit, possibly for assembly of the head region. Essential for efficient processing of 16S rRNA. May be needed both before and after RbfA during the maturation of 16S rRNA. It has affinity for free ribosomal 30S subunits but not for 70S ribosomes. The sequence is that of Ribosome maturation factor RimM from Rhizobium johnstonii (strain DSM 114642 / LMG 32736 / 3841) (Rhizobium leguminosarum bv. viciae).